The chain runs to 740 residues: Ethylene receptor 1 (740 aa).

The next 3 helical transmembrane spans lie at 23 to 43 (ISDFFIALAYFSIPLELIYFV), 53 to 73 (WVLVQFGAFIVLCGATHLINL), and 92 to 112 (VLTAVVSCATALMLVHIIPDL). Cysteine 65 and histidine 69 together coordinate Cu cation. The region spanning 158 to 307 (DRHTILKTTL…VVADQVAVAL (150 aa)) is the GAF domain. Residues 350–588 (VMNHEMRTPM…TFIVKLGIAE (239 aa)) enclose the Histidine kinase domain. Phosphohistidine; by autocatalysis is present on histidine 353. One can recognise a Response regulatory domain in the interval 614–731 (KVLVMDDNGV…KMRSVLSELI (118 aa)). At aspartate 662 the chain carries 4-aspartylphosphate.

This sequence belongs to the ethylene receptor family. As to quaternary structure, homodimer; disulfide-linked. Cu cation is required as a cofactor. In terms of processing, activation probably requires a transfer of a phosphate group between a His in the transmitter domain and an Asp of the receiver domain.

The protein localises to the endoplasmic reticulum membrane. The catalysed reaction is ATP + protein L-histidine = ADP + protein N-phospho-L-histidine.. Its function is as follows. May act early in the ethylene signal transduction pathway, possibly as an ethylene receptor, or as a regulator of the pathway. The polypeptide is Ethylene receptor 1 (ETR1) (Cucumis sativus (Cucumber)).